Consider the following 558-residue polypeptide: Phosphatidylserine lipase ABHD16A (558 aa).

Helical transmembrane passes span 60-80 (ILALASVFWSISYYSSPFAFF) and 93-113 (VVPFSHYAGTLLLLLAGVACL). The Cytoplasmic segment spans residues 114–558 (RGIGRWTNPQ…AQNFQMPWHL (445 aa)). The region spanning 281–407 (LVICCEGNAG…LVTRTVRQHL (127 aa)) is the AB hydrolase-1 domain. Catalysis depends on charge relay system residues serine 355, aspartate 430, and histidine 507.

It belongs to the AB hydrolase superfamily. ABHD16 family.

It localises to the membrane. The enzyme catalyses 1-heptadecanoyl-2-(5Z,8Z,11Z,14Z-eicosatetraenoyl)-sn-glycero-3-phosphoserine + H2O = 1-heptadecanoyl-sn-glycero-3-phosphoserine + (5Z,8Z,11Z,14Z)-eicosatetraenoate + H(+). It carries out the reaction 1-hexadecanoyl-2-(9Z-octadecenoyl)-sn-glycero-3-phospho-L-serine + H2O = 1-hexadecanoyl-sn-glycero-3-phospho-L-serine + (9Z)-octadecenoate + H(+). It catalyses the reaction 1-octadecanoyl-2-(9Z,12Z-octadecadienoyl)-sn-glycero-3-phosphoserine + H2O = 1-octadecanoyl-sn-glycero-3-phosphoserine + (9Z,12Z)-octadecadienoate + H(+). The catalysed reaction is 1-heptadecanoyl-2-(5Z,8Z,11Z,14Z-eicosatetraenoyl)-sn-glycero-3-phosphocholine + H2O = 1-heptadecanoyl-sn-glycero-3-phosphocholine + (5Z,8Z,11Z,14Z)-eicosatetraenoate + H(+). The enzyme catalyses 1-hexadecanoyl-2-(9Z-octadecenoyl)-sn-glycero-3-phosphoglycerol + H2O = 1-hexadecanoyl-sn-glycero-3-phosphoglycerol + (9Z)-octadecenoate + H(+). It carries out the reaction 1-hexadecanoyl-2-(9Z-octadecenoyl)-sn-glycero-3-phospho-(1D-myo-inositol) + H2O = 1-hexadecanoyl-sn-glycero-3-phospho-(1D-myo-inositol) + (9Z)-octadecenoate + H(+). It catalyses the reaction 1-heptadecanoyl-2-(5Z,8Z,11Z,14Z-eicosatetraenoyl)-sn-glycero-3-phosphoethanolamine + H2O = 1-heptadecanoyl-sn-glycero-3-phosphoethanolamine + (5Z,8Z,11Z,14Z)-eicosatetraenoate + H(+). The catalysed reaction is 1-hexadecanoyl-2-(9Z-octadecenoyl)-sn-glycero-3-phospho-(1'-sn-glycerol) + H2O = 1-hexadecanoyl-sn-glycero-3-phospho-(1'-sn-glycerol) + (9Z)-octadecenoate + H(+). The enzyme catalyses Hydrolyzes glycerol monoesters of long-chain fatty acids.. It carries out the reaction 1-tetradecanoylglycerol + H2O = tetradecanoate + glycerol + H(+). It catalyses the reaction 2-hexadecanoylglycerol + H2O = glycerol + hexadecanoate + H(+). The catalysed reaction is 1-(9Z-octadecenoyl)-glycerol + H2O = glycerol + (9Z)-octadecenoate + H(+). The enzyme catalyses 2-(9Z-octadecenoyl)-glycerol + H2O = glycerol + (9Z)-octadecenoate + H(+). It carries out the reaction 2-(9Z,12Z-octadecadienoyl)-glycerol + H2O = (9Z,12Z)-octadecadienoate + glycerol + H(+). It catalyses the reaction 1-(5Z,8Z,11Z,14Z-eicosatetraenoyl)-glycerol + H2O = glycerol + (5Z,8Z,11Z,14Z)-eicosatetraenoate + H(+). The catalysed reaction is 2-(5Z,8Z,11Z,14Z-eicosatetraenoyl)-glycerol + H2O = glycerol + (5Z,8Z,11Z,14Z)-eicosatetraenoate + H(+). The enzyme catalyses prostaglandin D2-1-glycerol ester + H2O = prostaglandin D2 + glycerol + H(+). It carries out the reaction 2-glyceryl-15-deoxy-Delta(12,14)-prostaglandin J2 + H2O = 15-deoxy-Delta(12,14)-prostaglandin J2 + glycerol + H(+). It catalyses the reaction 1-(9Z,12Z-octadecadienoyl)-glycerol + H2O = (9Z,12Z)-octadecadienoate + glycerol + H(+). Phosphatidylserine (PS) lipase that mediates the hydrolysis of phosphatidylserine to generate lysophosphatidylserine (LPS). LPS constitutes a class of signaling lipids that regulates immunological and neurological processes. Has no activity towards diacylglycerol, triacylglycerol or lysophosphatidylserine lipase. Also has monoacylglycerol lipase activity, with preference for 1-(9Z,12Z-octadecadienoyl)-glycerol (1-LG) and 2-glyceryl-15-deoxy-Delta(12,14)-prostaglandin J2 (15d-PGJ(2)-G). The chain is Phosphatidylserine lipase ABHD16A from Macaca fascicularis (Crab-eating macaque).